We begin with the raw amino-acid sequence, 339 residues long: MKKKTTGHTTIKDVAECAGVSKSTVSRYINGKIDAISPEKVKNIKKAIAELNYRPSKMAQGLKIKKSKLIGFVVADITNPFSVAAFRGVEEVCDQYGYSIMVCNTDNSPEKEREMLLKLEAHSVEGLILNATGENKDVLRAFAEQQIPTILIDRKLPDLKLDTVTTDNRWITKEILQKVYSKGYTDVALFTEPISSISPRAERAAVYQEMASVQNVNGLVRLHEIDVKDKEQLKAELRSFHKEMPEQKKAILALNGLIMLKIISCMEELGLRIPQDIGIAGFDDTEWYKLIGPGITTIAQPSHDMGRTAMERVLKRIEGDKGAPQTIELEAKVIMRKSL.

The HTH lacI-type domain maps to 9 to 64 (TTIKDVAECAGVSKSTVSRYINGKIDAISPEKVKNIKKAIAELNYRPSKMAQGLKI). Positions 11 to 30 (IKDVAECAGVSKSTVSRYIN) form a DNA-binding region, H-T-H motif.

Transcriptional repressor of the kdgRKAT and kduID operons for pectin utilization. The protein is HTH-type transcriptional regulator KdgR (kdgR) of Bacillus subtilis (strain 168).